Consider the following 154-residue polypeptide: Endoribonuclease YbeY (154 aa).

Zn(2+) is bound by residues H114, H118, and H124.

Belongs to the endoribonuclease YbeY family. Requires Zn(2+) as cofactor.

The protein resides in the cytoplasm. Its function is as follows. Single strand-specific metallo-endoribonuclease involved in late-stage 70S ribosome quality control and in maturation of the 3' terminus of the 16S rRNA. The protein is Endoribonuclease YbeY of Histophilus somni (strain 129Pt) (Haemophilus somnus).